The sequence spans 178 residues: Adenine phosphoribosyltransferase (178 aa).

Belongs to the purine/pyrimidine phosphoribosyltransferase family. Homodimer.

It localises to the cytoplasm. The enzyme catalyses AMP + diphosphate = 5-phospho-alpha-D-ribose 1-diphosphate + adenine. It functions in the pathway purine metabolism; AMP biosynthesis via salvage pathway; AMP from adenine: step 1/1. Functionally, catalyzes a salvage reaction resulting in the formation of AMP, that is energically less costly than de novo synthesis. The sequence is that of Adenine phosphoribosyltransferase from Mycoplasmoides gallisepticum (strain R(low / passage 15 / clone 2)) (Mycoplasma gallisepticum).